The sequence spans 591 residues: Oxaloacetate decarboxylase alpha chain (591 aa).

The Pyruvate carboxyltransferase domain occupies 3–263; that stretch reads IAITDVVLRD…DTGLDILKLE (261 aa). Residues 518 to 591 enclose the Biotinyl-binding domain; that stretch reads PAGAGTPVTA…SVGDTLMTLA (74 aa). Lysine 557 is modified (N6-biotinyllysine).

As to quaternary structure, composed of three chains (alpha, beta, and gamma). The cofactor is biotin.

The catalysed reaction is oxaloacetate + 2 Na(+)(in) + H(+) = pyruvate + 2 Na(+)(out) + CO2. Catalyzes the decarboxylation of oxaloacetate coupled to Na(+) translocation. This chain is Oxaloacetate decarboxylase alpha chain (oadA1), found in Salmonella typhi.